We begin with the raw amino-acid sequence, 55 residues long: TGB2 protein (55 aa).

A helical membrane pass occupies residues 20–39 (NAAFAVVLLLSLLIYGSRCL).

The protein belongs to the carlavirus/potexvirus TGB2 protein family.

Its subcellular location is the host membrane. Its function is as follows. The three proteins TGB1, TGB2 and TGB3 are required for virus movement. The protein is TGB2 protein of Potato virus X (strain Xc) (PVX).